Consider the following 270-residue polypeptide: Cell division protein DivIB (270 aa).

The Cytoplasmic segment spans residues M1–R38. A helical membrane pass occupies residues L39–D59. Residues K60–S270 are Extracellular-facing. The region spanning S64–A135 is the POTRA domain.

This sequence belongs to the FtsQ/DivIB family. DivIB subfamily.

The protein resides in the cell membrane. Functionally, cell division protein that may be involved in stabilizing or promoting the assembly of the division complex. The protein is Cell division protein DivIB of Erysipelothrix rhusiopathiae (strain Fujisawa).